We begin with the raw amino-acid sequence, 334 residues long: Pantothenate synthetase (334 aa).

34–41 (MGALHEGH) contacts ATP. H41 serves as the catalytic Proton donor. Residue Q71 coordinates (R)-pantoate. Q71 is a binding site for beta-alanine. Residue 158–161 (GQKD) participates in ATP binding. Q164 serves as a coordination point for (R)-pantoate. ATP-binding positions include V187 and 195–198 (LSSR). The segment at 288 to 334 (PLMLGTRGPAGEASPPNRERSEPGSAEQNKSPGEARTTPSGTSEASE) is disordered. Positions 313–334 (AEQNKSPGEARTTPSGTSEASE) are enriched in polar residues.

It belongs to the pantothenate synthetase family. As to quaternary structure, homodimer.

It is found in the cytoplasm. It catalyses the reaction (R)-pantoate + beta-alanine + ATP = (R)-pantothenate + AMP + diphosphate + H(+). Its pathway is cofactor biosynthesis; (R)-pantothenate biosynthesis; (R)-pantothenate from (R)-pantoate and beta-alanine: step 1/1. Catalyzes the condensation of pantoate with beta-alanine in an ATP-dependent reaction via a pantoyl-adenylate intermediate. The sequence is that of Pantothenate synthetase from Nocardioides sp. (strain ATCC BAA-499 / JS614).